The chain runs to 1057 residues: Carbamoyl phosphate synthase large chain (1057 aa).

The segment at 1–401 (MPKRNDIKTI…SLLKAIRSLE (401 aa)) is carboxyphosphate synthetic domain. The ATP site is built by R129, R169, G175, G176, K208, I210, E215, G241, I242, H243, Q284, and E298. One can recognise an ATP-grasp 1 domain in the interval 133–327 (RTLMNDLNVP…IAKLAAKIAV (195 aa)). Mg(2+) contacts are provided by Q284, E298, and N300. Mn(2+) is bound by residues Q284, E298, and N300. The oligomerization domain stretch occupies residues 402–546 (YGVHHLGLPN…YGTYETENES (145 aa)). A carbamoyl phosphate synthetic domain region spans residues 547–929 (IVTDKEKILV…ALFKGLTGSG (383 aa)). Positions 671–861 (EALLRKINVP…MAQLAMRAII (191 aa)) constitute an ATP-grasp 2 domain. R707, R746, L748, E752, G777, V778, H779, S780, Q820, and E832 together coordinate ATP. 3 residues coordinate Mg(2+): Q820, E832, and N834. Positions 820, 832, and 834 each coordinate Mn(2+). The MGS-like domain occupies 930 to 1057 (VEVKDHGTVL…ESMTFTMRQM (128 aa)). The allosteric domain stretch occupies residues 930 to 1057 (VEVKDHGTVL…ESMTFTMRQM (128 aa)).

Belongs to the CarB family. In terms of assembly, composed of two chains; the small (or glutamine) chain promotes the hydrolysis of glutamine to ammonia, which is used by the large (or ammonia) chain to synthesize carbamoyl phosphate. Tetramer of heterodimers (alpha,beta)4. Requires Mg(2+) as cofactor. Mn(2+) serves as cofactor.

It catalyses the reaction hydrogencarbonate + L-glutamine + 2 ATP + H2O = carbamoyl phosphate + L-glutamate + 2 ADP + phosphate + 2 H(+). It carries out the reaction hydrogencarbonate + NH4(+) + 2 ATP = carbamoyl phosphate + 2 ADP + phosphate + 2 H(+). It participates in amino-acid biosynthesis; L-arginine biosynthesis; carbamoyl phosphate from bicarbonate: step 1/1. The protein operates within pyrimidine metabolism; UMP biosynthesis via de novo pathway; (S)-dihydroorotate from bicarbonate: step 1/3. Its function is as follows. Large subunit of the glutamine-dependent carbamoyl phosphate synthetase (CPSase). CPSase catalyzes the formation of carbamoyl phosphate from the ammonia moiety of glutamine, carbonate, and phosphate donated by ATP, constituting the first step of 2 biosynthetic pathways, one leading to arginine and/or urea and the other to pyrimidine nucleotides. The large subunit (synthetase) binds the substrates ammonia (free or transferred from glutamine from the small subunit), hydrogencarbonate and ATP and carries out an ATP-coupled ligase reaction, activating hydrogencarbonate by forming carboxy phosphate which reacts with ammonia to form carbamoyl phosphate. The polypeptide is Carbamoyl phosphate synthase large chain (Staphylococcus aureus (strain MRSA252)).